A 337-amino-acid polypeptide reads, in one-letter code: Holliday junction branch migration complex subunit RuvB (337 aa).

The interval 1-180 (MTRLISADKS…FGVISRLEFY (180 aa)) is large ATPase domain (RuvB-L). ATP is bound by residues Leu-19, Arg-20, Gly-61, Lys-64, Thr-65, Thr-66, 127–129 (EDF), Arg-170, Tyr-180, and Arg-217. Thr-65 is a Mg(2+) binding site. Residues 181 to 251 (THEELAFIIT…VADQALALLE (71 aa)) form a small ATPAse domain (RuvB-S) region. Positions 254 to 337 (DMGFDMMDRA…APEPPQGKLF (84 aa)) are head domain (RuvB-H). Positions 309 and 314 each coordinate DNA.

This sequence belongs to the RuvB family. As to quaternary structure, homohexamer. Forms an RuvA(8)-RuvB(12)-Holliday junction (HJ) complex. HJ DNA is sandwiched between 2 RuvA tetramers; dsDNA enters through RuvA and exits via RuvB. An RuvB hexamer assembles on each DNA strand where it exits the tetramer. Each RuvB hexamer is contacted by two RuvA subunits (via domain III) on 2 adjacent RuvB subunits; this complex drives branch migration. In the full resolvosome a probable DNA-RuvA(4)-RuvB(12)-RuvC(2) complex forms which resolves the HJ.

The protein resides in the cytoplasm. The enzyme catalyses ATP + H2O = ADP + phosphate + H(+). Its function is as follows. The RuvA-RuvB-RuvC complex processes Holliday junction (HJ) DNA during genetic recombination and DNA repair, while the RuvA-RuvB complex plays an important role in the rescue of blocked DNA replication forks via replication fork reversal (RFR). RuvA specifically binds to HJ cruciform DNA, conferring on it an open structure. The RuvB hexamer acts as an ATP-dependent pump, pulling dsDNA into and through the RuvAB complex. RuvB forms 2 homohexamers on either side of HJ DNA bound by 1 or 2 RuvA tetramers; 4 subunits per hexamer contact DNA at a time. Coordinated motions by a converter formed by DNA-disengaged RuvB subunits stimulates ATP hydrolysis and nucleotide exchange. Immobilization of the converter enables RuvB to convert the ATP-contained energy into a lever motion, pulling 2 nucleotides of DNA out of the RuvA tetramer per ATP hydrolyzed, thus driving DNA branch migration. The RuvB motors rotate together with the DNA substrate, which together with the progressing nucleotide cycle form the mechanistic basis for DNA recombination by continuous HJ branch migration. Branch migration allows RuvC to scan DNA until it finds its consensus sequence, where it cleaves and resolves cruciform DNA. The sequence is that of Holliday junction branch migration complex subunit RuvB from Citrifermentans bemidjiense (strain ATCC BAA-1014 / DSM 16622 / JCM 12645 / Bem) (Geobacter bemidjiensis).